We begin with the raw amino-acid sequence, 505 residues long: MKNEKKKSGIEPKVFFPPLIIVGILCWLTVRDLDAANVVINAVFSYVTNVWGWAFEWYMIVMLFGWFWLVFGPYAKKRLGDEKPEFSTASWIFMMFASCTSAAVLFWGSIEIYYYISTPPFGLEPNSTGAKEIGLAYSLFHWGPLPWATYSFLSVAFAYFFFVRKMDVIRPSSTLVPLVGEKHAKGLFGTIVDNFYLVALIFAMGTSLGLATPLVTECMQWLFGIPHTLQLDAIIITCWIILNAICVACGLQKGVRIASDVRSYLSFLMLGWVFIVSGASFIMNYFTDSVGMLLMHLPRMLFYTDAIGKGGFPQGWTVFYWAWWVIYAIQMSIFLARISRGRTVRELCFGMVMGLTASTWILWTVLGSNTLLLMDKNILNIPQLIEQHVVARAIIETWAALPLSTATMWGFFILCFIATVTLINACSYTLAMSTCREVRDGEEPPLLVRIGWSVLVGIIGIVLLALGGLKPIQTAIIAGGCPLFFVNIMVTLSFIKDAKVHWKDK.

A run of 12 helical transmembrane segments spans residues I10 to V30, W51 to F71, I92 to I112, G143 to V163, F195 to V215, L231 to L251, S263 to M283, W316 to A336, L347 to G367, L403 to I423, L446 to L466, and A475 to I495.

This sequence belongs to the BCCT transporter (TC 2.A.15) family. CaiT subfamily. As to quaternary structure, homotrimer.

The protein localises to the cell inner membrane. It carries out the reaction 4-(trimethylamino)butanoate(in) + (R)-carnitine(out) = 4-(trimethylamino)butanoate(out) + (R)-carnitine(in). It participates in amine and polyamine metabolism; carnitine metabolism. Catalyzes the exchange of L-carnitine for gamma-butyrobetaine. This is L-carnitine/gamma-butyrobetaine antiporter from Salmonella gallinarum (strain 287/91 / NCTC 13346).